The chain runs to 319 residues: Acetyl-coenzyme A carboxylase carboxyl transferase subunit alpha (319 aa).

The CoA carboxyltransferase C-terminal domain occupies 32–293 (NVDTEVRALE…KAVLLNELEA (262 aa)).

Belongs to the AccA family. As to quaternary structure, acetyl-CoA carboxylase is a heterohexamer composed of biotin carboxyl carrier protein (AccB), biotin carboxylase (AccC) and two subunits each of ACCase subunit alpha (AccA) and ACCase subunit beta (AccD).

It localises to the cytoplasm. It catalyses the reaction N(6)-carboxybiotinyl-L-lysyl-[protein] + acetyl-CoA = N(6)-biotinyl-L-lysyl-[protein] + malonyl-CoA. It functions in the pathway lipid metabolism; malonyl-CoA biosynthesis; malonyl-CoA from acetyl-CoA: step 1/1. Component of the acetyl coenzyme A carboxylase (ACC) complex. First, biotin carboxylase catalyzes the carboxylation of biotin on its carrier protein (BCCP) and then the CO(2) group is transferred by the carboxyltransferase to acetyl-CoA to form malonyl-CoA. This Xylella fastidiosa (strain M12) protein is Acetyl-coenzyme A carboxylase carboxyl transferase subunit alpha.